The chain runs to 109 residues: Probable gas vesicle protein J1 (109 aa).

This sequence belongs to the gas vesicle GvpA family. Interacts with GvpA.

It is found in the gas vesicle. Its function is as follows. A minor component of the gas vesicle, might be involved in nucleating gas vesicle formation. Gas vesicles (GV) are hollow, gas filled proteinaceous nanostructures. It is not clear what function GVs perform in soil bacteria. The protein is Probable gas vesicle protein J1 (gvpJ1) of Streptomyces coelicolor (strain ATCC BAA-471 / A3(2) / M145).